A 452-amino-acid polypeptide reads, in one-letter code: FAD transporter (452 aa).

12 helical membrane-spanning segments follow: residues 21–41, 49–69, 96–116, 131–151, 167–187, 199–219, 248–270, 283–303, 324–344, 357–377, 392–412, and 417–437; these read LPNL…TFFI, LAAI…AIGV, ALLL…IFIE, LIHD…LLMV, MIMT…IFGI, AIAT…LLII, AALM…AHID, LESV…PFIA, FILV…QPLA, LSFY…VIIF, VINL…GSYI, and GLLL…YYLA.

Belongs to the multi antimicrobial extrusion (MATE) (TC 2.A.66.1) family.

It is found in the cell inner membrane. In terms of biological role, flavin adenine dinucleotide (FAD) transporter that facilitates export of flavin electron shuttles. This Shewanella oneidensis (strain ATCC 700550 / JCM 31522 / CIP 106686 / LMG 19005 / NCIMB 14063 / MR-1) protein is FAD transporter.